The primary structure comprises 83 residues: Small ribosomal subunit protein eS21 (83 aa).

At Met-1 the chain carries N-acetylmethionine. Position 81 is an N6-acetyllysine (Lys-81).

Belongs to the eukaryotic ribosomal protein eS21 family. As to quaternary structure, component of the 40S small ribosomal subunit.

Its subcellular location is the cytoplasm. It is found in the cytosol. The protein localises to the rough endoplasmic reticulum. Component of the small ribosomal subunit. The ribosome is a large ribonucleoprotein complex responsible for the synthesis of proteins in the cell. This chain is Small ribosomal subunit protein eS21 (Rps21), found in Mus musculus (Mouse).